Consider the following 251-residue polypeptide: Core protein VP8 (251 aa).

A propeptide spans 1-32 (removed by core protease OPG083/I7); the sequence is MSLLLENLIEEDTIFFAGSISEYDDLQMVIAG.

The protein belongs to the orthopoxvirus OPG098 family. Undergoes morphogenesis-associated proteolysis which cleaves the 28 kDa to a 25-kDa product. Proteolytic cleavage of major core proteins P4a (OPG136/A10L), P4b (OPG129/A3L), and VP8 (OPG098/L4R), which occurs at a late stage of core formation, is required for production of infectious mature virions (MV).

It is found in the virion. The protein localises to the host cytoplasm. Functionally, major core structural protein. The chain is Core protein VP8 (OPG098) from Vaccinia virus (strain Western Reserve) (VACV).